Here is a 336-residue protein sequence, read N- to C-terminus: uncharacterized protein (336 aa).

An N-terminal signal peptide occupies residues 1–33 (MGSAWPAEIRKIAKISKRLLGATVILGFGVAEA).

This is an uncharacterized protein from Sinorhizobium fredii (strain NBRC 101917 / NGR234).